The sequence spans 712 residues: BTB/POZ domain-containing protein 18 (712 aa).

The region spanning 34-102 (CDVLLQAEGE…LYTSEMEVSQ (69 aa)) is the BTB domain. 3 disordered regions span residues 157 to 176 (VTPSHHPHTPLPTNQTPCPL), 212 to 355 (RACP…EGQV), and 374 to 410 (ETPLKNTQDSPQIPDPGGDFQEPSGTQPFSSNEQEMS). A compositionally biased stretch (polar residues) spans 218 to 228 (QEKNSSPSSHS). Positions 229-238 (QEPRENKNDT) are enriched in basic and acidic residues. The segment covering 277–288 (SKPSSILSGSSS) has biased composition (low complexity). Residues 303 to 313 (VNKETPEDKPK) are compositionally biased toward basic and acidic residues. The segment covering 396-410 (PSGTQPFSSNEQEMS) has biased composition (polar residues). Phosphoserine occurs at positions 420, 671, and 672. Disordered stretches follow at residues 653–676 (KAGKEVSGHSELLGSLPASSEEEE) and 691–712 (TTVPSVWPDPSSESETEVDILT). The segment covering 702-712 (SESETEVDILT) has biased composition (acidic residues).

The protein resides in the nucleus. Functionally, specifically required during spermatogenesis to promote expression of piRNA precursors. The piRNA metabolic process mediates the repression of transposable elements during meiosis by forming complexes composed of piRNAs and Piwi proteins and governs the methylation and subsequent repression of transposons, which is essential for the germline integrity. Acts by facilitating transcription elongation at piRNA loci during pachytene. This chain is BTB/POZ domain-containing protein 18, found in Homo sapiens (Human).